The following is a 676-amino-acid chain: Methionine--tRNA ligase (676 aa).

The short motif at 15 to 25 (PYANGPIHLGH) is the 'HIGH' region element. Residues Cys-146, Cys-149, Cys-159, and Cys-162 each contribute to the Zn(2+) site. The 'KMSKS' region motif lies at 332–336 (KMSKS). Lys-335 provides a ligand contact to ATP. The 102-residue stretch at 575–676 (DFAKIDLRIA…EGAQPGMRVK (102 aa)) folds into the tRNA-binding domain.

Belongs to the class-I aminoacyl-tRNA synthetase family. MetG type 1 subfamily. In terms of assembly, homodimer. It depends on Zn(2+) as a cofactor.

It localises to the cytoplasm. It carries out the reaction tRNA(Met) + L-methionine + ATP = L-methionyl-tRNA(Met) + AMP + diphosphate. Is required not only for elongation of protein synthesis but also for the initiation of all mRNA translation through initiator tRNA(fMet) aminoacylation. The protein is Methionine--tRNA ligase of Shewanella sp. (strain MR-7).